Consider the following 223-residue polypeptide: Transmembrane protein 235 (223 aa).

Positions 1 to 28 (MARLGALLLAAALGALLSFALLAAAVAS) are cleaved as a signal peptide. Asn41 is a glycosylation site (N-linked (GlcNAc...) asparagine). The next 3 membrane-spanning stretches (helical) occupy residues 96-116 (VIVV…CGLL), 126-146 (LLFT…GVSI), and 176-196 (WSMA…TLLL).

This sequence belongs to the PMP-22/EMP/MP20 family. In terms of processing, N-glycosylated.

It is found in the membrane. The protein localises to the endoplasmic reticulum. The sequence is that of Transmembrane protein 235 (TMEM235) from Homo sapiens (Human).